The primary structure comprises 2104 residues: Transmembrane matrix receptor MUP-4 (2104 aa).

Positions 1 to 15 are cleaved as a signal peptide; sequence MRWVPLVLLPLIASA. The Extracellular segment spans residues 16-1860; the sequence is ATTYQHRQTY…FCETAPSNLP (1845 aa). EGF-like domains follow at residues 71–110, 122–163, and 175–213; these read VVNE…TSPD, TTNE…VSTS, and SVNE…ASPN. 6 disulfide bridges follow: C75/C89, C83/C98, C126/C142, C136/C151, C179/C192, and C186/C201. Residues 220 to 265 form the WR1 domain; the sequence is RVCNKPKAPEYYGQQSRQPQCSEGSGCGPNEECRFNTAGEKVCQCR. 3 consecutive EGF-like domains span residues 278-315, 327-360, and 377-416; these read VFSQ…VSPD, VRNE…SNCI, and AANQ…VSSN. 7 cysteine pairs are disulfide-bonded: C282/C294, C288/C303, C331/C344, C338/C353, C355/C359, C381/C395, and C389/C404. The VWFA domain maps to 437–612; sequence DLVFLIDGSG…DLNTRLRSAI (176 aa). N494 and N556 each carry an N-linked (GlcNAc...) asparagine glycan. EGF-like domains are found at residues 728–772 and 819–857; these read SNDE…NKCE and LIDE…KSPE. 21 disulfide bridges follow: C732/C746, C740/C756, C758/C771, C823/C836, C830/C845, C873/C886, C880/C895, C923/C937, C931/C946, C972/C985, C979/C995, C1020/C1034, C1028/C1046, C1075/C1089, C1083/C1098, C1125/C1139, C1133/C1148, C1173/C1187, C1181/C1196, C1219/C1233, and C1227/C1242. Positions 869-907 constitute an EGF-like 9; calcium-binding domain; that stretch reads QRNECLDGTHNCSMNADCIDLPDGFLCRCKEDFVDISPN. N-linked (GlcNAc...) asparagine glycosylation occurs at N879. 7 EGF-like domains span residues 919-958, 968-1007, 1016-1058, 1071-1110, 1121-1160, 1169-1208, and 1215-1254; these read LVNE…HDEL, LNQI…KSPL, VEPI…VGAV, LVNE…ESPV, LVNE…QKPE, IINE…EMPS, and RFDE…EISD. N-linked (GlcNAc...) asparagine glycosylation is present at N1037. N-linked (GlcNAc...) asparagine glycosylation occurs at N1132. N1271, N1403, and N1576 each carry an N-linked (GlcNAc...) asparagine glycan. SEA domains are found at residues 1322–1444 and 1495–1620; these read PTTS…DDAD and AVES…PEQL. EGF-like domains are found at residues 1622–1658, 1669–1705, and 1717–1754; these read PFSN…LNPS, GVNE…YVNS, and SIDY…LRKS. Disulfide bonds link C1626-C1637, C1631-C1646, C1673-C1687, C1681-C1696, C1721-C1733, C1727-C1742, C1776-C1789, C1783-C1798, C1821-C1830, C1824-C1841, and C1843-C1852. N-linked (GlcNAc...) asparagine glycosylation is found at N1730 and N1782. The 39-residue stretch at 1772–1810 folds into the EGF-like 20; calcium-binding domain; the sequence is DIDECALGLHNCSAAAICIDKKIGYECQCQEGYEDGNPS. One can recognise an EGF-like 21 domain in the interval 1817 to 1853; that stretch reads AASLCGLCNGHGDCIHDALSSNVTCACLDGYTGQFCE. N1838 is a glycosylation site (N-linked (GlcNAc...) asparagine). The chain crosses the membrane as a helical span at residues 1861–1881; that stretch reads LILMTLLALLFLLLTLLCCLY. Residues 1882-2104 lie on the Cytoplasmic side of the membrane; that stretch reads MCARCRCFGA…TTKAEEVNYF (223 aa). The segment covering 2031–2040 has biased composition (low complexity); sequence SGAMMSSASG. A disordered region spans residues 2031 to 2104; the sequence is SGAMMSSASG…TTKAEEVNYF (74 aa). Basic and acidic residues-rich tracts occupy residues 2062–2076 and 2083–2104; these read VYDR…HDFE and TGTE…VNYF.

As to expression, abundant at hypodermal cell-matrix junctions overlying muscle of threefold embryos. Expression continues in body wall muscle in larvae and adults and is also detected in other regions where cells show mechanical attachment to the hypodermis including the inner surface of the pharynx, overlying anal and intestinal muscles, overlying vulval and uterine sex muscles, male tail muscle attachment zones and the six mechanosensory neurons (at protein level).

It localises to the cell junction. Its subcellular location is the hemidesmosome. It is found in the cytoplasm. The protein localises to the cytoskeleton. The protein resides in the cell membrane. Functionally, required for junctional attachments between hypodermis and muscle, and between the apical epithelial surface and the cuticular matrix. Essential for enclosure of the embryo by the hypodermis, hypodermal integrity, embryo elongation, and maintenance of hypodermal morphology in fully elongated embryos. The chain is Transmembrane matrix receptor MUP-4 from Caenorhabditis elegans.